A 526-amino-acid chain; its full sequence is Fusicoccadiene 8-ol C-16-hydroxylase (526 aa).

A helical membrane pass occupies residues 34 to 56 (AFVGFSVLGLTLLFSKLFYNAYL). N-linked (GlcNAc...) asparagine glycans are attached at residues Asn309, Asn418, and Asn434. Cys470 contributes to the heme binding site.

This sequence belongs to the cytochrome P450 family. Heme is required as a cofactor.

It localises to the membrane. It functions in the pathway mycotoxin biosynthesis. Functionally, cytochrome P450 monooxygenase; part of the 2 gene clusters that mediate the biosynthesis of fusicoccins, diterpene glucosides that display phytohormone-like activity and function as potent activators of plasma membrane H(+)-ATPases in plants by modifying 14-3-3 proteins and cause the plant disease constriction canker. The first step in the pathway is performed by the fusicoccadiene synthase PaFS that possesses both prenyl transferase and terpene cyclase activity, converting isopentenyl diphosphate and dimethylallyl diphosphate into geranylgeranyl diphosphate (GGDP) and successively converting GGDP into fusicocca-2,10(14)-diene, a precursor for fusicoccin H. The second step is the oxidation at the C-8 position by the cytochrome P450 monooxygenase PaP450-2 to yield fusicocca-2,10(14)-diene-8-beta-ol. The cytochrome P450 monooxygenase PaP450-1 then catalyzes the hydroxylation at the C-16 position to produce fusicocca-2,10(14)-diene-8-beta,16-diol. The dioxygenase fc-dox then catalyzes the 16-oxydation of fusicocca-2,10(14)-diene-8-beta,16-diol to yield an aldehyde (8-beta-hydroxyfusicocca-1,10(14)-dien-16-al). The short-chain dehydrogenase/reductase fc-sdr catalyzes the reduction of the aldehyde to yield fusicocca-1,10(14)-diene-8-beta,16-diol. The next step is the hydroxylation at C-9 performed by the cytochrome P450 monooxygenase PaP450-3 that leads to fusicoccin H aglycon which is glycosylated to fusicoccin H by the O-glycosyltransferase PaGT. Hydroxylation at C-12 by the cytochrome P450 monooxygenase PaP450-4 leads then to the production of fusicoccin Q and is followed by methylation by the O-methyltransferase PaMT to yield fusicoccin P. Fusicoccin P is further converted to fusicoccin J via prenylation by the O-glucose prenyltransferase PaPT. Cytochrome P450 monooxygenase PaP450-5 then performs hydroxylation at C-19 to yield dideacetyl-fusicoccin A which is acetylated to 3'-O-deacetyl-fusicoccin A by the O-acetyltransferase PaAT-2. Finally, a another acetylation by the O-acetyltransferase PaAT-1 yields fusicoccin A. The protein is Fusicoccadiene 8-ol C-16-hydroxylase of Phomopsis amygdali (Fusicoccum amygdali).